A 206-amino-acid polypeptide reads, in one-letter code: Small ribosomal subunit protein uS4 (206 aa).

The S4 RNA-binding domain maps to 96–156; it reads SRLDNVVYRM…EKSRNQSRIA (61 aa).

Belongs to the universal ribosomal protein uS4 family. Part of the 30S ribosomal subunit. Contacts protein S5. The interaction surface between S4 and S5 is involved in control of translational fidelity.

In terms of biological role, one of the primary rRNA binding proteins, it binds directly to 16S rRNA where it nucleates assembly of the body of the 30S subunit. With S5 and S12 plays an important role in translational accuracy. The chain is Small ribosomal subunit protein uS4 from Hydrogenovibrio crunogenus (strain DSM 25203 / XCL-2) (Thiomicrospira crunogena).